The chain runs to 90 residues: Conotoxin Im6.2 (90 aa).

The first 18 residues, 1-18, serve as a signal peptide directing secretion; the sequence is MKLTILLLVAALLVLTQA. The propeptide occupies 19-29; the sequence is RTERRRVKSRK. Intrachain disulfides connect Cys-61–Cys-75, Cys-68–Cys-79, and Cys-74–Cys-84. Glu-89 carries the post-translational modification Glutamic acid 1-amide.

It belongs to the conotoxin O2 superfamily. Expressed by the venom duct.

The protein localises to the secreted. In terms of biological role, probable neurotoxin. The polypeptide is Conotoxin Im6.2 (Conus imperialis (Imperial cone)).